We begin with the raw amino-acid sequence, 436 residues long: Trigger factor (436 aa).

The region spanning 161 to 246 is the PPIase FKBP-type domain; it reads DDQLNIDFVG…VNSVAEPKLP (86 aa).

This sequence belongs to the FKBP-type PPIase family. Tig subfamily.

Its subcellular location is the cytoplasm. It carries out the reaction [protein]-peptidylproline (omega=180) = [protein]-peptidylproline (omega=0). Its function is as follows. Involved in protein export. Acts as a chaperone by maintaining the newly synthesized protein in an open conformation. Functions as a peptidyl-prolyl cis-trans isomerase. The chain is Trigger factor from Pseudomonas paraeruginosa (strain DSM 24068 / PA7) (Pseudomonas aeruginosa (strain PA7)).